A 62-amino-acid chain; its full sequence is Conotoxin Lt5.5 (62 aa).

Residues 1–22 (MRCLQVFIIFLLLIPSPPSVDA) form the signal peptide. Residues 23–48 (QRKTKDDVPLASFHDNAKRTLKRLWN) constitute a propeptide that is removed on maturation.

Belongs to the conotoxin T superfamily. Contains 2 disulfide bonds that can be either 'C1-C3, C2-C4' or 'C1-C4, C2-C3', since these disulfide connectivities have been observed for conotoxins with cysteine framework V (for examples, see AC P0DQQ7 and AC P81755). As to expression, expressed by the venom duct.

Its subcellular location is the secreted. The protein is Conotoxin Lt5.5 of Conus litteratus (Lettered cone).